The following is a 567-amino-acid chain: Potassium-transporting ATPase potassium-binding subunit (567 aa).

The next 12 helical transmembrane spans lie at 11–31, 67–87, 136–156, 179–199, 255–275, 286–306, 333–353, 363–383, 385–405, 422–442, 489–509, and 532–552; these read LYLLVLLALAWPLGRYLAALL, AAAILLFNLAGVVLLFLLQRW, GLAVQNFLSAATGIAVVVALV, LWLLLPLSIVVALVLVWQGVV, FSNWVEMLSIFLVPAALVVMF, VVLLAAMTVLFVGAFAVVYLA, FGVLASSLFATITTAASCGAV, LGGGMTMLLMQLGEVVFGGVG, GLYGMLLFAVLAVFMAGLMIG, LVSVAILVGPLLVLAGTAIAV, LMLAVAMWFGRFAVIVPVLAL, and LFVVLLVLSVLLIGALTYIPA.

Belongs to the KdpA family. The system is composed of three essential subunits: KdpA, KdpB and KdpC.

It is found in the cell inner membrane. Its function is as follows. Part of the high-affinity ATP-driven potassium transport (or Kdp) system, which catalyzes the hydrolysis of ATP coupled with the electrogenic transport of potassium into the cytoplasm. This subunit binds the periplasmic potassium ions and delivers the ions to the membrane domain of KdpB through an intramembrane tunnel. This chain is Potassium-transporting ATPase potassium-binding subunit, found in Laribacter hongkongensis (strain HLHK9).